Reading from the N-terminus, the 614-residue chain is Beta-glucosidase 33 (614 aa).

The first 26 residues, 1–26, serve as a signal peptide directing secretion; sequence MATATLTLFLGLLALTSTILSFNADA. A beta-D-glucoside is bound by residues Gln113, His217, and 262–263; that span reads NE. Catalysis depends on Glu263, which acts as the Proton donor. Cys282 and Cys290 are joined by a disulfide. Asn344 is a glycosylation site (N-linked (GlcNAc...) asparagine). Position 407 (Tyr407) interacts with a beta-D-glucoside. N-linked (GlcNAc...) asparagine glycans are attached at residues Asn419, Asn432, and Asn439. Glu479 serves as a coordination point for a beta-D-glucoside. Glu479 serves as the catalytic Nucleophile. Residue Asn491 is glycosylated (N-linked (GlcNAc...) asparagine). Residues Trp529, 536–537, and Phe545 each bind a beta-D-glucoside; that span reads EW.

Belongs to the glycosyl hydrolase 1 family.

The enzyme catalyses Hydrolysis of terminal, non-reducing beta-D-glucosyl residues with release of beta-D-glucose.. The polypeptide is Beta-glucosidase 33 (Arabidopsis thaliana (Mouse-ear cress)).